The following is a 119-amino-acid chain: 5-hydroxyisourate hydrolase (119 aa).

Positions 10, 48, and 116 each coordinate substrate.

This sequence belongs to the transthyretin family. 5-hydroxyisourate hydrolase subfamily. In terms of assembly, homotetramer.

It catalyses the reaction 5-hydroxyisourate + H2O = 5-hydroxy-2-oxo-4-ureido-2,5-dihydro-1H-imidazole-5-carboxylate + H(+). Its pathway is purine metabolism; urate degradation; (S)-allantoin from urate: step 2/3. Functionally, catalyzes the hydrolysis of 5-hydroxyisourate (HIU) to 2-oxo-4-hydroxy-4-carboxy-5-ureidoimidazoline (OHCU). The sequence is that of 5-hydroxyisourate hydrolase from Deinococcus radiodurans (strain ATCC 13939 / DSM 20539 / JCM 16871 / CCUG 27074 / LMG 4051 / NBRC 15346 / NCIMB 9279 / VKM B-1422 / R1).